Consider the following 366-residue polypeptide: Alanine racemase (366 aa).

K33 acts as the Proton acceptor; specific for D-alanine in catalysis. K33 carries the post-translational modification N6-(pyridoxal phosphate)lysine. Residue R129 participates in substrate binding. Catalysis depends on Y253, which acts as the Proton acceptor; specific for L-alanine. M301 provides a ligand contact to substrate.

Belongs to the alanine racemase family. The cofactor is pyridoxal 5'-phosphate.

The enzyme catalyses L-alanine = D-alanine. It functions in the pathway amino-acid biosynthesis; D-alanine biosynthesis; D-alanine from L-alanine: step 1/1. Its function is as follows. Catalyzes the interconversion of L-alanine and D-alanine. May also act on other amino acids. The chain is Alanine racemase (alr) from Xanthomonas oryzae pv. oryzae (strain MAFF 311018).